A 593-amino-acid polypeptide reads, in one-letter code: Adenine deaminase 2 (593 aa).

It belongs to the metallo-dependent hydrolases superfamily. Adenine deaminase family. Requires Mn(2+) as cofactor.

The enzyme catalyses adenine + H2O + H(+) = hypoxanthine + NH4(+). This Rhizobium meliloti (strain 1021) (Ensifer meliloti) protein is Adenine deaminase 2.